We begin with the raw amino-acid sequence, 665 residues long: Probable protein transport Sec1a (665 aa).

The tract at residues 543–594 (PSPSFRGIPSASTQTSPAHQPAQSMRSRRTGGTWARPRDSDDGYSSDSVLKH) is disordered. Composition is skewed to polar residues over residues 552-567 (SAST…AQSM) and 585-594 (GYSSDSVLKH).

This sequence belongs to the STXBP/unc-18/SEC1 family.

Its function is as follows. Involved in the vesicle trafficking. Binds syntaxins. The sequence is that of Probable protein transport Sec1a from Oryza sativa subsp. japonica (Rice).